A 215-amino-acid polypeptide reads, in one-letter code: MKGVYFVSGIDTDIGKTVATGVLAKQLLQQGKSVITQKPVQTGCQNIADDIAVHRKIMGKPMQEADKQGLTMPEIFSYPASPHLAARLDGRALDLDKIRTATQQLAAQYEIVLVEGAGGLMVPLTENLLTIDYIRQQGYPVILVTSGRLGSINHTLLSFAALKQYGIRLHSLVFNHIHDSRDAHIAQDSLNYLKCRLKADFSEAEWMELAKTDAV.

13–18 provides a ligand contact to ATP; that stretch reads DIGKTV. T17 is a Mg(2+) binding site. K38 is an active-site residue. T42 contributes to the substrate binding site. ATP contacts are provided by residues D50, 115–118, and 175–176; these read EGAG and NH. D50 and E115 together coordinate Mg(2+).

The protein belongs to the dethiobiotin synthetase family. As to quaternary structure, homodimer. It depends on Mg(2+) as a cofactor.

The protein localises to the cytoplasm. It carries out the reaction (7R,8S)-7,8-diammoniononanoate + CO2 + ATP = (4R,5S)-dethiobiotin + ADP + phosphate + 3 H(+). Its pathway is cofactor biosynthesis; biotin biosynthesis; biotin from 7,8-diaminononanoate: step 1/2. In terms of biological role, catalyzes a mechanistically unusual reaction, the ATP-dependent insertion of CO2 between the N7 and N8 nitrogen atoms of 7,8-diaminopelargonic acid (DAPA, also called 7,8-diammoniononanoate) to form a ureido ring. The chain is ATP-dependent dethiobiotin synthetase BioD from Neisseria meningitidis serogroup C (strain 053442).